Reading from the N-terminus, the 246-residue chain is Lipoprotein-releasing system ATP-binding protein LolD 1 (246 aa).

Positions 6-244 (LKLERIRKDL…ASVTNEAASL (239 aa)) constitute an ABC transporter domain. Residue 43 to 50 (GPSGSGKS) participates in ATP binding.

Belongs to the ABC transporter superfamily. Lipoprotein translocase (TC 3.A.1.125) family. The complex is composed of two ATP-binding proteins (LolD) and two transmembrane proteins (LolC and LolE).

The protein localises to the cell inner membrane. In terms of biological role, part of the ABC transporter complex LolCDE involved in the translocation of mature outer membrane-directed lipoproteins, from the inner membrane to the periplasmic chaperone, LolA. Responsible for the formation of the LolA-lipoprotein complex in an ATP-dependent manner. The sequence is that of Lipoprotein-releasing system ATP-binding protein LolD 1 from Chlorobium chlorochromatii (strain CaD3).